The primary structure comprises 474 residues: TOM1-like protein 1 (474 aa).

Residues 22–154 form the VHS domain; the sequence is ATFAGVLTED…DLLKKGVQFP (133 aa). Positions 153–180 are disordered; sequence FPPSDGEPETRQEAGQISPNRPTSVPTA. Polar residues predominate over residues 165 to 178; it reads EAGQISPNRPTSVP. The residue at position 170 (Ser-170) is a Phosphoserine. A GAT domain is found at 199-287; it reads EQIGKLHSEL…AVLGYERFTR (89 aa). The segment at 291–317 is disordered; the sequence is RLLEQKRNRTEATRTSSEPSAPSCDLL. Residues 293 to 302 are compositionally biased toward basic and acidic residues; sequence LEQKRNRTEA. Phosphoserine occurs at positions 313 and 320. Positions 392–395 are interaction with GRB2; that stretch reads YDNF. The SH3-binding motif lies at 420 to 424; it reads LPPLP. Residues 441 to 444 are interaction with PIK3R1; sequence YEVM. A Phosphotyrosine modification is found at Tyr-457. The SH2-binding motif lies at 457-460; it reads YEEI.

This sequence belongs to the TOM1 family. As to quaternary structure, interacts with LYN. Interacts with the SH2 and SH3 domains of FYN when phosphorylated. Also interacts with GRB2 and PIK3R1 when phosphorylated. Post-translationally, phosphorylated on tyrosines by LYN. Phosphorylated on tyrosines by FYN. In terms of tissue distribution, strongly expressed in brain and kidney, expressed at intermediate levels skin and heart, and weakly expressed in thymus. Not expressed in liver and spleen.

The protein localises to the golgi apparatus. The protein resides in the golgi stack. It is found in the endosome membrane. Its subcellular location is the cytoplasm. It localises to the membrane. In terms of biological role, probable adapter protein involved in signaling pathways. Interacts with the SH2 and SH3 domains of various signaling proteins when it is phosphorylated. May promote FYN activation, possibly by disrupting intramolecular SH3-dependent interactions. The polypeptide is TOM1-like protein 1 (Tom1l1) (Mus musculus (Mouse)).